A 502-amino-acid chain; its full sequence is Glycerol kinase (502 aa).

Residue threonine 14 coordinates ADP. The ATP site is built by threonine 14, threonine 15, and serine 16. Sn-glycerol 3-phosphate is bound at residue threonine 14. Arginine 18 provides a ligand contact to ADP. The sn-glycerol 3-phosphate site is built by arginine 84, glutamate 85, and tyrosine 136. Positions 84, 85, and 136 each coordinate glycerol. Histidine 232 is modified (phosphohistidine; by HPr). Aspartate 246 contacts sn-glycerol 3-phosphate. Residues aspartate 246 and glutamine 247 each contribute to the glycerol site. ADP contacts are provided by threonine 268 and glycine 311. 4 residues coordinate ATP: threonine 268, glycine 311, glutamine 315, and glycine 412. Residues glycine 412 and asparagine 416 each contribute to the ADP site.

It belongs to the FGGY kinase family. In terms of assembly, homotetramer and homodimer (in equilibrium). The phosphoenolpyruvate-dependent sugar phosphotransferase system (PTS), including enzyme I, and histidine-containing protein (HPr) are required for the phosphorylation, which leads to the activation of the enzyme.

The catalysed reaction is glycerol + ATP = sn-glycerol 3-phosphate + ADP + H(+). The protein operates within polyol metabolism; glycerol degradation via glycerol kinase pathway; sn-glycerol 3-phosphate from glycerol: step 1/1. Activated by phosphorylation and inhibited by fructose 1,6-bisphosphate (FBP). Functionally, key enzyme in the regulation of glycerol uptake and metabolism. Catalyzes the phosphorylation of glycerol to yield sn-glycerol 3-phosphate. The sequence is that of Glycerol kinase from Streptococcus pneumoniae (strain ATCC 700669 / Spain 23F-1).